Consider the following 154-residue polypeptide: MPKTDVSGLSQLGTKVDLPQSPEEAVLERVPSGHEGTDFVVRFTAPEFTSLCPMTGQPDFAHIVIDYVPDGWLVESKSLKLFLHSFRNHGAFHEDCTVDIAKRLVSLLSPKWLRIGAYWYPRGGIPIDVFWQTGNPPEGVWLPDQGVPTYRGRG.

The tract at residues 1–24 (MPKTDVSGLSQLGTKVDLPQSPEE) is disordered. The Thioimide intermediate role is filled by C52. The Proton donor role is filled by D59. Substrate is bound by residues 74-76 (VES) and 93-94 (HE).

The protein belongs to the GTP cyclohydrolase I family. QueF type 1 subfamily.

It is found in the cytoplasm. It carries out the reaction 7-aminomethyl-7-carbaguanine + 2 NADP(+) = 7-cyano-7-deazaguanine + 2 NADPH + 3 H(+). Its pathway is tRNA modification; tRNA-queuosine biosynthesis. Functionally, catalyzes the NADPH-dependent reduction of 7-cyano-7-deazaguanine (preQ0) to 7-aminomethyl-7-deazaguanine (preQ1). The polypeptide is NADPH-dependent 7-cyano-7-deazaguanine reductase (Sinorhizobium fredii (strain NBRC 101917 / NGR234)).